Reading from the N-terminus, the 327-residue chain is DNA repair and recombination protein RadA (327 aa).

An ATP-binding site is contributed by 113–120; that stretch reads GEFGSGKS.

The protein belongs to the eukaryotic RecA-like protein family.

Involved in DNA repair and in homologous recombination. Binds and assemble on single-stranded DNA to form a nucleoprotein filament. Hydrolyzes ATP in a ssDNA-dependent manner and promotes DNA strand exchange between homologous DNA molecules. This chain is DNA repair and recombination protein RadA, found in Ignicoccus hospitalis (strain KIN4/I / DSM 18386 / JCM 14125).